The primary structure comprises 85 residues: Small ribosomal subunit protein bS20 (85 aa).

It belongs to the bacterial ribosomal protein bS20 family.

Binds directly to 16S ribosomal RNA. In Lactobacillus johnsonii (strain CNCM I-12250 / La1 / NCC 533), this protein is Small ribosomal subunit protein bS20.